Consider the following 220-residue polypeptide: Tumor protein D54 (220 aa).

An N-acetylmethionine modification is found at M1. 3 positions are modified to phosphoserine: S3, S12, and S19. The stretch at 40–82 (GLTEGEEEELRAELAKVEEEIVTLRQVLAAKERHCGELKRRLG) forms a coiled coil. S96, S149, S168, and S175 each carry phosphoserine. T177 is subject to Phosphothreonine. At S180 the chain carries Phosphoserine. T187 is modified (phosphothreonine). Residues 189 to 220 (KSKVVGGRENGSDNLPPSPGSGDQTLPDHAPF) are disordered. Residues S206 and S209 each carry the phosphoserine modification.

This sequence belongs to the TPD52 family. As to quaternary structure, forms a homodimer or heterodimer with other members of the family. Interacts with MAL2.

The chain is Tumor protein D54 (Tpd52l2) from Mus musculus (Mouse).